A 717-amino-acid polypeptide reads, in one-letter code: Pentatricopeptide repeat-containing protein At1g53600, mitochondrial (717 aa).

The N-terminal 47 residues, 1-47 (MVMRPISNKGLIYRHNICLRCNSTLAVSNHEPITQKTRNFLETTTTS), are a transit peptide targeting the mitochondrion. PPR repeat units follow at residues 49–79 (AIFQCNSQISKHARNGNLQEAEAIFRQMSNR), 80–110 (SIVSWIAMISAYAENGKMSKAWQVFDEMPVR), 111–142 (VTTSYNAMITAMIKNKCDLGKAYELFCDIPEK), 143–173 (NAVSYATMITGFVRAGRFDEAEFLYAETPVK), 176–206 (DSVASNVLLSGYLRAGKWNEAVRVFQGMAVK), 207–241 (EVVSCSSMVHGYCKMGRIVDARSLFDRMTERNVIT), 242–272 (WTAMIDGYFKAGFFEDGFGLFLRMRQEGDVK), 274–308 (NSNTLAVMFKACRDFVRYREGSQIHGLVSRMPLEF), 309–339 (DLFLGNSLMSMYSKLGYMGEAKAVFGVMKNK), 340–374 (DSVSWNSLITGLVQRKQISEAYELFEKMPGKDMVS), 375–401 (WTDMIKGFSGKGEISKCVELFGMMPEK), 402–436 (DNITWTAMISAFVSNGYYEEALCWFHKMLQKEVCP), 437–471 (NSYTFSSVLSATASLADLIEGLQIHGRVVKMNIVN), 472–502 (DLSVQNSLVSMYCKCGNTNDAYKIFSCISEP), 503–537 (NIVSYNTMISGYSYNGFGKKALKLFSMLESSGKEP), 538–568 (NGVTFLALLSACVHVGYVDLGWKYFKSMKSS), and 574–604 (GPDHYACMVDLLGRSGLLDDASNLISTMPCK). The type E motif stretch occupies residues 609–684 (VWGSLLSASK…DPGSSWIILK (76 aa)). Residues 685–715 (GEVHNFLAGDESQLNLEEIGFTLKMIRKEME) are type E(+) motif.

Belongs to the PPR family. PCMP-E subfamily.

It is found in the mitochondrion. This Arabidopsis thaliana (Mouse-ear cress) protein is Pentatricopeptide repeat-containing protein At1g53600, mitochondrial (PCMP-E63).